We begin with the raw amino-acid sequence, 506 residues long: Arabinose import ATP-binding protein AraG (506 aa).

ABC transporter domains are found at residues 10-245 and 253-501; these read LEFC…MVGR and YRSR…MLGN. Residue 42-49 participates in ATP binding; that stretch reads GENGAGKS.

This sequence belongs to the ABC transporter superfamily. Arabinose importer (TC 3.A.1.2.2) family. The complex is composed of two ATP-binding proteins (AraG), two transmembrane proteins (AraH) and a solute-binding protein (AraF).

The protein resides in the cell inner membrane. The enzyme catalyses L-arabinose(out) + ATP + H2O = L-arabinose(in) + ADP + phosphate + H(+). In terms of biological role, part of the ABC transporter complex AraFGH involved in arabinose import. Responsible for energy coupling to the transport system. The chain is Arabinose import ATP-binding protein AraG from Vibrio parahaemolyticus serotype O3:K6 (strain RIMD 2210633).